The chain runs to 368 residues: D-Ala-D/L-Ala epimerase (368 aa).

Substrate-binding positions include T135 and K160–K162. Residues D190, E216, and D241 each coordinate Mg(2+). Substrate-binding positions include K265 and D318–D320.

It belongs to the mandelate racemase/muconate lactonizing enzyme family. The cofactor is Mg(2+).

Its function is as follows. Catalyzes the epimerization of D-Ala-D-Ala to D-Ala-L-Ala. Has broad substrate specificity and catalyzes the epimerization of a variety of dipeptides containing an N-terminal Ala followed by a hydrophobic or polar residue, such as Val, Ser and Met (in vitro). The sequence is that of D-Ala-D/L-Ala epimerase (tfdD) from Cytophaga hutchinsonii (strain ATCC 33406 / DSM 1761 / CIP 103989 / NBRC 15051 / NCIMB 9469 / D465).